The chain runs to 200 residues: MILQAALFLAGLTVVSGSICCPPKQFNSYQYVTFVNSTTTIRALYYIVYDGDNQRYLITGDRNNKQLVGTTKVIYDYKKRIAYSIDAKARTCSKFPVQGQFEDQENVCVPGGAEILGPLFYGYNQSRLNSQSYAYNTTSLDGSHHNVVTTVSEDDCVPIVICTITTGGPGGNSLYTVGYNDFYPGIKDITVFDIPPYCNA.

The N-terminal stretch at 1-17 (MILQAALFLAGLTVVSG) is a signal peptide. Residues N36, N124, and N136 are each glycosylated (N-linked (GlcNAc...) asparagine).

This sequence belongs to the ependymin family. As to expression, component of the acid-soluble and acid-insoluble organic matrix of prismatic shell layers (at protein level). Expressed discontinuously in the anterior zone of the outer fold of the mantle where its expression correlates with shell pigmentation.

The protein resides in the secreted. The protein is Ependymin-related protein 1 of Haliotis asinina (Donkey's ear abalone).